The chain runs to 166 residues: NAD(P)H-quinone oxidoreductase subunit I, chloroplastic (166 aa).

2 consecutive 4Fe-4S ferredoxin-type domains span residues 55–84 and 95–124; these read GRIHFEFDKCIACEVCVRVCPIDLPVVDWK and LNYSIDFGICIFCGNCVEYCPTNCLSMTEE. Residues Cys64, Cys67, Cys70, Cys74, Cys104, Cys107, Cys110, and Cys114 each coordinate [4Fe-4S] cluster.

Belongs to the complex I 23 kDa subunit family. In terms of assembly, NDH is composed of at least 16 different subunits, 5 of which are encoded in the nucleus. [4Fe-4S] cluster serves as cofactor.

It is found in the plastid. The protein resides in the chloroplast thylakoid membrane. It catalyses the reaction a plastoquinone + NADH + (n+1) H(+)(in) = a plastoquinol + NAD(+) + n H(+)(out). The catalysed reaction is a plastoquinone + NADPH + (n+1) H(+)(in) = a plastoquinol + NADP(+) + n H(+)(out). NDH shuttles electrons from NAD(P)H:plastoquinone, via FMN and iron-sulfur (Fe-S) centers, to quinones in the photosynthetic chain and possibly in a chloroplast respiratory chain. The immediate electron acceptor for the enzyme in this species is believed to be plastoquinone. Couples the redox reaction to proton translocation, and thus conserves the redox energy in a proton gradient. This Chaenactis santolinoides (Santolina pincushion) protein is NAD(P)H-quinone oxidoreductase subunit I, chloroplastic.